A 206-amino-acid polypeptide reads, in one-letter code: Probable N-acetyltransferase 14 (206 aa).

In terms of domain architecture, N-acetyltransferase spans 55-206; it reads LRFVLASFAL…TLVREFSKEL (152 aa). Residues 57–77 traverse the membrane as a helical segment; it reads FVLASFALALLLPVFLAVAAM.

Belongs to the camello family.

The protein resides in the membrane. Functionally, probable acetyltransferase. Its function is as follows. May act as a transcription factor regulating the expression of coproporphyrinogen oxidase by binding to a promoter regulatory element. This Bos taurus (Bovine) protein is Probable N-acetyltransferase 14.